A 77-amino-acid polypeptide reads, in one-letter code: Acyl carrier protein (77 aa).

A Carrier domain is found at 2–77 (ADVLERVTKI…DAVNYIKSRL (76 aa)). At serine 37 the chain carries O-(pantetheine 4'-phosphoryl)serine.

This sequence belongs to the acyl carrier protein (ACP) family. 4'-phosphopantetheine is transferred from CoA to a specific serine of apo-ACP by AcpS. This modification is essential for activity because fatty acids are bound in thioester linkage to the sulfhydryl of the prosthetic group.

Its subcellular location is the cytoplasm. It functions in the pathway lipid metabolism; fatty acid biosynthesis. Its function is as follows. Carrier of the growing fatty acid chain in fatty acid biosynthesis. This Geobacillus kaustophilus (strain HTA426) protein is Acyl carrier protein.